Consider the following 565-residue polypeptide: NAD-dependent malic enzyme (565 aa).

Y104 functions as the Proton donor in the catalytic mechanism. R157 contributes to the NAD(+) binding site. K175 serves as the catalytic Proton acceptor. Residues E246, D247, and D270 each contribute to the a divalent metal cation site. D270 and N418 together coordinate NAD(+).

Belongs to the malic enzymes family. As to quaternary structure, homotetramer. The cofactor is Mg(2+). Requires Mn(2+) as cofactor.

It carries out the reaction (S)-malate + NAD(+) = pyruvate + CO2 + NADH. It catalyses the reaction oxaloacetate + H(+) = pyruvate + CO2. In Shigella boydii serotype 18 (strain CDC 3083-94 / BS512), this protein is NAD-dependent malic enzyme.